Here is a 497-residue protein sequence, read N- to C-terminus: Anthranilate synthase component 1 (497 aa).

L-tryptophan-binding positions include Ser-49 and 271-273 (PYL). 312 to 313 (GT) contacts chorismate. A Mg(2+)-binding site is contributed by Glu-339. Chorismate contacts are provided by residues Arg-447, 461–463 (GAG), and Gly-463. Mg(2+) is bound at residue Glu-476.

Belongs to the anthranilate synthase component I family. Heterotetramer consisting of two non-identical subunits: a beta subunit (TrpG) and a large alpha subunit (TrpE). Mg(2+) serves as cofactor.

The enzyme catalyses chorismate + L-glutamine = anthranilate + pyruvate + L-glutamate + H(+). It functions in the pathway amino-acid biosynthesis; L-tryptophan biosynthesis; L-tryptophan from chorismate: step 1/5. Its activity is regulated as follows. Feedback inhibited by tryptophan. Its function is as follows. Part of a heterotetrameric complex that catalyzes the two-step biosynthesis of anthranilate, an intermediate in the biosynthesis of L-tryptophan. In the first step, the glutamine-binding beta subunit (TrpG) of anthranilate synthase (AS) provides the glutamine amidotransferase activity which generates ammonia as a substrate that, along with chorismate, is used in the second step, catalyzed by the large alpha subunit of AS (TrpE) to produce anthranilate. In the absence of TrpG, TrpE can synthesize anthranilate directly from chorismate and high concentrations of ammonia. In Acinetobacter calcoaceticus, this protein is Anthranilate synthase component 1 (trpE).